The chain runs to 20 residues: Phylloseptin-O1 (20 aa).

At G20 the chain carries Glycine amide.

In terms of tissue distribution, expressed by the skin glands.

The protein resides in the secreted. In terms of biological role, has antiprotozoal activity against T.cruzi. The polypeptide is Phylloseptin-O1 (psn4) (Pithecopus oreades (Orange-legged leaf frog)).